Consider the following 547-residue polypeptide: G protein-coupled receptor associated sorting protein 3 (547 aa).

Residues 1–10 show a composition bias toward basic residues; the sequence is MAGTKNKTRA. Disordered stretches follow at residues 1–32 and 80–102; these read MAGTKNKTRAQAKTEKKAAIQAKAGAEREATG and TLGKAMGDFTPKAGNESTSSTCK.

Belongs to the GPRASP family. As to quaternary structure, homodimer. As to expression, highly expressed in brain. Not expressed in lung or liver. Down-regulated in brain from patients suffering from Alzheimer disease.

The protein resides in the cytoplasm. The protein localises to the nucleus. Functionally, survival and differentiation promoting protein that plays a role in the regulation of neurosynaptogenesis. Induces phosphatase PP2A activity which results in APP dephosphorylation and inhibits BACE1-mediated processing of APP. This Homo sapiens (Human) protein is G protein-coupled receptor associated sorting protein 3.